A 300-amino-acid chain; its full sequence is Dihydroorotate dehydrogenase B (NAD(+)), catalytic subunit (300 aa).

Residues serine 20 and lysine 44 to glycine 45 each bind FMN. Substrate is bound by residues lysine 44 and asparagine 68–leucine 72. FMN-binding residues include asparagine 98 and asparagine 125. A substrate-binding site is contributed by asparagine 125. Cysteine 128 acts as the Nucleophile in catalysis. FMN contacts are provided by lysine 163 and isoleucine 189. A substrate-binding site is contributed by asparagine 190 to threonine 191. Residues glycine 215, glycine 241–glycine 242, and glycine 263–threonine 264 each bind FMN.

The protein belongs to the dihydroorotate dehydrogenase family. Type 1 subfamily. In terms of assembly, heterotetramer of 2 PyrK and 2 PyrD type B subunits. FMN is required as a cofactor.

The protein localises to the cytoplasm. It catalyses the reaction (S)-dihydroorotate + NAD(+) = orotate + NADH + H(+). It functions in the pathway pyrimidine metabolism; UMP biosynthesis via de novo pathway; orotate from (S)-dihydroorotate (NAD(+) route): step 1/1. Catalyzes the conversion of dihydroorotate to orotate with NAD(+) as electron acceptor. The protein is Dihydroorotate dehydrogenase B (NAD(+)), catalytic subunit (pyrD) of Lachnoclostridium phytofermentans (strain ATCC 700394 / DSM 18823 / ISDg) (Clostridium phytofermentans).